The sequence spans 241 residues: Thiamine import ATP-binding protein ThiQ (241 aa).

Residues I7–I235 form the ABC transporter domain. Residue G37–S44 coordinates ATP.

This sequence belongs to the ABC transporter superfamily. Thiamine importer (TC 3.A.1.19.1) family. The complex is composed of two ATP-binding proteins (ThiQ), two transmembrane proteins (ThiP) and a solute-binding protein (ThiB).

It localises to the cell inner membrane. It catalyses the reaction thiamine(out) + ATP + H2O = thiamine(in) + ADP + phosphate + H(+). Its function is as follows. Part of the ABC transporter complex ThiBPQ involved in thiamine import. Responsible for energy coupling to the transport system. In Brucella abortus biovar 1 (strain 9-941), this protein is Thiamine import ATP-binding protein ThiQ.